The sequence spans 328 residues: Aspartate carbamoyltransferase catalytic subunit (328 aa).

Carbamoyl phosphate contacts are provided by Arg-64 and Thr-65. Lys-92 contributes to the L-aspartate binding site. Arg-114, His-144, and Gln-147 together coordinate carbamoyl phosphate. Residues Arg-177 and Arg-232 each coordinate L-aspartate. Gly-273 and Pro-274 together coordinate carbamoyl phosphate.

This sequence belongs to the aspartate/ornithine carbamoyltransferase superfamily. ATCase family. Heterododecamer (2C3:3R2) of six catalytic PyrB chains organized as two trimers (C3), and six regulatory PyrI chains organized as three dimers (R2).

It carries out the reaction carbamoyl phosphate + L-aspartate = N-carbamoyl-L-aspartate + phosphate + H(+). It participates in pyrimidine metabolism; UMP biosynthesis via de novo pathway; (S)-dihydroorotate from bicarbonate: step 2/3. Its function is as follows. Catalyzes the condensation of carbamoyl phosphate and aspartate to form carbamoyl aspartate and inorganic phosphate, the committed step in the de novo pyrimidine nucleotide biosynthesis pathway. The polypeptide is Aspartate carbamoyltransferase catalytic subunit (Halorhodospira halophila (strain DSM 244 / SL1) (Ectothiorhodospira halophila (strain DSM 244 / SL1))).